The following is a 166-amino-acid chain: MLPFFSNTTSKSVSVSSFQGSPATPLSFLFFFFLCRAGSSMTGCFTFFLDFIFFFAGVLGPSPMGMYSGASTLTGFFLLRFLGQLSMDLEGLEWLGRASPSWWIFFSSSPSHRVPWGSCASASAPRLPVPHPPSPLSKCPQHPRPRRTKGPGLRKLWGPGPPFFPS.

Asn-7 is a glycosylation site (N-linked (GlcNAc...) asparagine). 3 consecutive transmembrane segments (helical) span residues 15-35 (VSSFQGSPATPLSFLFFFFLC), 41-61 (MTGCFTFFLDFIFFFAGVLGP), and 63-83 (PMGMYSGASTLTGFFLLRFLG). Positions 127–166 (LPVPHPPSPLSKCPQHPRPRRTKGPGLRKLWGPGPPFFPS) are disordered.

Its subcellular location is the membrane. This chain is Putative transmembrane protein encoded by LINC00477 (LINC00477), found in Homo sapiens (Human).